The chain runs to 191 residues: Fe/S biogenesis protein NfuA (191 aa).

[4Fe-4S] cluster contacts are provided by Cys-149 and Cys-152.

Belongs to the NfuA family. In terms of assembly, homodimer. Requires [4Fe-4S] cluster as cofactor.

Involved in iron-sulfur cluster biogenesis. Binds a 4Fe-4S cluster, can transfer this cluster to apoproteins, and thereby intervenes in the maturation of Fe/S proteins. Could also act as a scaffold/chaperone for damaged Fe/S proteins. The polypeptide is Fe/S biogenesis protein NfuA (Yersinia enterocolitica serotype O:8 / biotype 1B (strain NCTC 13174 / 8081)).